The chain runs to 174 residues: Urease accessory protein UreE (174 aa).

The protein belongs to the UreE family.

It is found in the cytoplasm. Its function is as follows. Involved in urease metallocenter assembly. Binds nickel. Probably functions as a nickel donor during metallocenter assembly. The polypeptide is Urease accessory protein UreE (Helicobacter hepaticus (strain ATCC 51449 / 3B1)).